The primary structure comprises 140 residues: UPF0299 membrane protein CGSHiGG_01475 (140 aa).

Transmembrane regions (helical) follow at residues 1 to 21 (MIQKLFLLVRSLVILSIMLYL), 33 to 52 (VPGSIWGLLLLFLGLTTRVI), 60 to 80 (GASLLIRFMAVLFVPVSVGII), and 92 to 112 (ILLVPNIVSTCVTLLVIGFLG).

This sequence belongs to the UPF0299 family.

It is found in the cell inner membrane. The sequence is that of UPF0299 membrane protein CGSHiGG_01475 from Haemophilus influenzae (strain PittGG).